Reading from the N-terminus, the 260-residue chain is Thaumatin-like protein 1 (260 aa).

The signal sequence occupies residues 1-32 (MIITVLHSHVSFYFIILSFLFFHALHLVGSDG). Intrachain disulfides connect Cys-41–Cys-255, Cys-89–Cys-100, Cys-105–Cys-112, Cys-166–Cys-245, Cys-171–Cys-228, Cys-179–Cys-191, Cys-195–Cys-204, and Cys-205–Cys-215.

It belongs to the thaumatin family. Expressed only in roots.

Its function is as follows. Involved in local responses of roots to colonization by non-pathogenic plant growth-promoting rhizobacteria (PGPR) fluorescent Pseudomonas spp., but seems to not being required for the establishment of subsequent induced systemic resistance (ISR). The sequence is that of Thaumatin-like protein 1 from Arabidopsis thaliana (Mouse-ear cress).